Reading from the N-terminus, the 1410-residue chain is Pogo transposable element with ZNF domain (1410 aa).

The segment at 238–291 (RSTVPQSQSQQTKSTPSTSTTPTATQPTSLGQLAVQSPGQSNQTTNPKLAPSFP) is disordered. The span at 239-266 (STVPQSQSQQTKSTPSTSTTPTATQPTS) shows a compositional bias: low complexity. The segment covering 267 to 284 (LGQLAVQSPGQSNQTTNP) has biased composition (polar residues). Residue K319 forms a Glycyl lysine isopeptide (Lys-Gly) (interchain with G-Cter in SUMO2) linkage. Positions 332 to 361 (QSPGPVVVSNNSSAHGSQRTSGPESSMKVT) are disordered. S333 is subject to Phosphoserine. Over residues 345-361 (AHGSQRTSGPESSMKVT) the composition is skewed to polar residues. A Glycyl lysine isopeptide (Lys-Gly) (interchain with G-Cter in SUMO2) cross-link involves residue K359. Position 363 is a phosphoserine (S363). The C2H2-type 1; atypical zinc-finger motif lies at 375–397 (KICPRCNAQFRVTEALRGHMCYC). Residues 409-456 (KSLDSEPSVPSAAKPPSPEKTAPVASTPSSTPIPALSPPTKVPEPNEN) are disordered. K422 participates in a covalent cross-link: Glycyl lysine isopeptide (Lys-Gly) (interchain with G-Cter in SUMO2). The residue at position 425 (S425) is a Phosphoserine. T439 is modified (phosphothreonine). S445 is subject to Phosphoserine. Residue K449 forms a Glycyl lysine isopeptide (Lys-Gly) (interchain with G-Cter in SUMO2) linkage. T463 is subject to Phosphothreonine. A Glycyl lysine isopeptide (Lys-Gly) (interchain with G-Cter in SUMO2) cross-link involves residue K489. 6 C2H2-type zinc fingers span residues 494-516 (FRCP…MKHH), 530-553 (TICQ…ENVH), 560-583 (TKCK…KDTH), 590-613 (YVCQ…RMIH), 619-641 (LLCP…YMRH), and 647-670 (YHCN…LQHH). K629 is covalently cross-linked (Glycyl lysine isopeptide (Lys-Gly) (interchain with G-Cter in SUMO2)). K677 is covalently cross-linked (Glycyl lysine isopeptide (Lys-Gly) (interchain with G-Cter in SUMO2)). Residues 693 to 715 (SRGQPRTVPVSSNDTPPSALQEA) are disordered. Positions 701–710 (PVSSNDTPPS) are enriched in polar residues. Residues 771–794 (VHCSLCRYSTCCSRAYANHMINNH) form a C2H2-type 8 zinc finger. Residue K801 forms a Glycyl lysine isopeptide (Lys-Gly) (interchain with G-Cter in SUMO2) linkage. Residues 810–850 (VSGIKLACTSCTFVTSVGDAMAKHLVFNPSHRSSSILPRGL) are required for interaction with CBX5. A C2H2-type 9 zinc finger spans residues 815-840 (LACTSCTFVTSVGDAMAKHLVFNPSH). S856 bears the Phosphoserine mark. Disordered regions lie at residues 857–927 (RHGQ…PQAL) and 942–969 (VDDQ…GVGK). Residues 860–870 (QTRDRVHDRNV) show a composition bias toward basic and acidic residues. K883 is covalently cross-linked (Glycyl lysine isopeptide (Lys-Gly) (interchain with G-Cter in SUMO2)). Positions 892 to 915 (ATPAEPEELLTPLAPALPSPASTA) are enriched in low complexity. In terms of domain architecture, HTH CENPB-type spans 1015 to 1085 (GENLEGKYLS…MLRHHLTPHA (71 aa)). The DDE-1 domain occupies 1117-1323 (LPLSMIVAID…DCPELVQRSF (207 aa)). Position 1338 is a phosphoserine (S1338). Residues 1340-1360 (TRNADMQEELIASLEEQLKLS) adopt a coiled-coil conformation. Residues 1360 to 1400 (SGEHSESSTPRPRSSPEETIEPESLHQLFEGESETESFYGF) form a disordered region. Phosphoserine occurs at positions 1364 and 1367. A Phosphothreonine modification is found at T1368. Phosphoserine is present on residues S1373 and S1374. The residue at position 1378 (T1378) is a Phosphothreonine. The short motif at 1380–1404 (EPESLHQLFEGESETESFYGFEEAD) is the Integrase domain-binding motif (IBM) element. The residue at position 1392 (S1392) is a Phosphoserine; by CK2. A Phosphothreonine modification is found at T1394. Phosphoserine; by CK2 is present on S1396.

Interacts with CBX1, CBX3, MAD2L2 and CHAMP1. Interacts with CBX5; POGZ competes with PXVXL motif-containing proteins such as INCENP and TRIM28 for interaction with CBX5. Interacts (via IBM motif) with PSIP1 isoform 1 (via IBD domain); phosphorylation increases its affinity for PSIP1. Interacts with HDGFL2. Post-translationally, phosphorylation increases its interaction with PSIP1.

Its subcellular location is the nucleus. It localises to the chromosome. It is found in the cytoplasm. In terms of biological role, plays a role in mitotic cell cycle progression and is involved in kinetochore assembly and mitotic sister chromatid cohesion. Probably through its association with CBX5 plays a role in mitotic chromosome segregation by regulating aurora kinase B/AURKB activation and AURKB and CBX5 dissociation from chromosome arms. Promotes the repair of DNA double-strand breaks through the homologous recombination pathway. This Homo sapiens (Human) protein is Pogo transposable element with ZNF domain (POGZ).